A 254-amino-acid chain; its full sequence is Cobalt transport protein CbiM (254 aa).

The signal sequence occupies residues 1-31 (MKTILRPFTLLSRSIFLALFVLFLWSPDAHA). Helical transmembrane passes span 37 to 57 (GFLPPSWSLFWWVLTLPFLVV), 74 to 94 (LLLAMAGAFAFVLSSLKIPSV), 106 to 126 (LGAVLFGPSVMSVLGVIVLLF), 128 to 148 (ALLLAHGGLTTLGANAFSMAI), 169 to 189 (WLAVFLAAAIGDLMTYVVTSL), and 212 to 232 (IFALTQVPLAISEGILTVMVF).

This sequence belongs to the CbiM family. In terms of assembly, forms an energy-coupling factor (ECF) transporter complex composed of an ATP-binding protein (A component, CbiO), a transmembrane protein (T component, CbiQ) and 2 possible substrate-capture proteins (S components, CbiM and CbiN) of unknown stoichimetry.

It is found in the cell inner membrane. It functions in the pathway cofactor biosynthesis; adenosylcobalamin biosynthesis. Its function is as follows. Part of the energy-coupling factor (ECF) transporter complex CbiMNOQ involved in cobalt import. The sequence is that of Cobalt transport protein CbiM from Chlorobium limicola (strain DSM 245 / NBRC 103803 / 6330).